The following is a 497-amino-acid chain: Sestrin homolog (497 aa).

Ser185 and Ser190 each carry phosphoserine. The segment covering 226-241 (NANPDYDSQTAASSNG) has biased composition (polar residues). Positions 226-255 (NANPDYDSQTAASSNGGAPPDSANAVADGP) are disordered.

The protein belongs to the sestrin family. Associates with the GATOR2 complex; the interaction is probably direct. Associates with the GATOR1 complex; the interaction is probably indirect and mediated by the GATOR2 complex. In terms of tissue distribution, highly expressed in muscle-enriched tissues (at protein level).

The protein resides in the nucleus. It localises to the cytoplasm. Functions as a negative feedback regulator of mTOR function. The protein is Sestrin homolog of Drosophila melanogaster (Fruit fly).